The sequence spans 574 residues: Arginine--tRNA ligase (574 aa).

The 'HIGH' region signature appears at 126–136; sequence PNIAKRMHVGH.

Belongs to the class-I aminoacyl-tRNA synthetase family. Monomer.

The protein resides in the cytoplasm. The enzyme catalyses tRNA(Arg) + L-arginine + ATP = L-arginyl-tRNA(Arg) + AMP + diphosphate. The protein is Arginine--tRNA ligase of Chloroflexus aurantiacus (strain ATCC 29366 / DSM 635 / J-10-fl).